Here is a 128-residue protein sequence, read N- to C-terminus: uncharacterized protein (128 aa).

Positions 1–24 (MKMTKLTTLLLTATLGLASGAALA) are cleaved as a signal peptide. 2 stretches are compositionally biased toward low complexity: residues 24–44 (AAES…NAGQ) and 52–70 (NVAP…GNTN). A disordered region spans residues 24-128 (AAESNAQSSN…VNTKTDGTTQ (105 aa)). Polar residues predominate over residues 71–82 (STMQHPDGSTMN). Residues 85 to 110 (GMTKDEEHKNTMCKDGRCPDINKKVE) are compositionally biased toward basic and acidic residues. Residues 113–128 (NGVNNDVNTKTDGTTQ) show a composition bias toward polar residues.

This is an uncharacterized protein from Salmonella typhi.